A 120-amino-acid polypeptide reads, in one-letter code: U13-lycotoxin-Ls1f (120 aa).

The signal sequence occupies residues 1–19; sequence MKILFVLISILYAVYRFSS. A propeptide spanning residues 20-54 is cleaved from the precursor; sequence EEDVDSAYLANELEPVEDINSEQYAALEPKEEQER. Intrachain disulfides connect cysteine 56–cysteine 70, cysteine 63–cysteine 76, cysteine 69–cysteine 87, and cysteine 78–cysteine 85. Residues 56-95 form the Agouti domain; that stretch reads CAGMGQDCKDDCDCCLNIATCNCWFGRYFCSCTFGDYQTC.

It belongs to the neurotoxin 05 (agouti) family. Contains 6 disulfide bonds. Expressed by the venom gland.

The protein resides in the secreted. In Lycosa singoriensis (Wolf spider), this protein is U13-lycotoxin-Ls1f.